Here is a 1226-residue protein sequence, read N- to C-terminus: Methionine synthase (1226 aa).

Residues 6–326 (RAQIEAQLKQ…EHIRHMAMAV (321 aa)) enclose the Hcy-binding domain. Cys248, Cys311, and Cys312 together coordinate Zn(2+). The Pterin-binding domain occupies 357-618 (FVNVGERTNV…VPEKLREAVE (262 aa)). The region spanning 651–745 (SALEWRTWSV…FINASKQAGS (95 aa)) is the B12-binding N-terminal domain. Methylcob(III)alamin is bound by residues Glu695, 757–761 (GDVHD), His760, Ser805, Thr809, and Ala861. Residues 747 to 882 (NGKILLATVK…SDELRPAFVE (136 aa)) form the B12-binding domain. Positions 898–1226 (KKPRTKPVTL…EKWLGPNING (329 aa)) constitute an AdoMet activation domain. Residues Asp948, Arg1136, and 1191–1192 (YF) contribute to the S-adenosyl-L-methionine site.

Belongs to the vitamin-B12 dependent methionine synthase family. The cofactor is methylcob(III)alamin. Zn(2+) serves as cofactor.

It carries out the reaction (6S)-5-methyl-5,6,7,8-tetrahydrofolate + L-homocysteine = (6S)-5,6,7,8-tetrahydrofolate + L-methionine. It functions in the pathway amino-acid biosynthesis; L-methionine biosynthesis via de novo pathway; L-methionine from L-homocysteine (MetH route): step 1/1. Functionally, catalyzes the transfer of a methyl group from methyl-cobalamin to homocysteine, yielding enzyme-bound cob(I)alamin and methionine. Subsequently, remethylates the cofactor using methyltetrahydrofolate. This chain is Methionine synthase (metH), found in Vibrio vulnificus (strain CMCP6).